The primary structure comprises 435 residues: E3 ubiquitin-protein ligase RING1 (435 aa).

The segment at 46–86 adopts an RING-type zinc-finger fold; that stretch reads CPICLDMLKKTMTTKECLHRFCSDCIVTALRSGNKECPTCR. The disordered stretch occupies residues 144-322; sequence KLQSQNRPQR…TEGEGNGELG (179 aa). Residues 157–170 show a composition bias toward gly residues; sequence KGGGGGGGGGGNGN. Low complexity-rich tracts occupy residues 171 to 188, 202 to 211, 222 to 251, and 259 to 278; these read GAAN…TAVG, SNDSNSNTNS, SGTS…TSAT, and SNPP…SSSS. Ser202 bears the Phosphoserine mark. At Ser266 the chain carries Phosphoserine. Residue Thr267 is modified to Phosphothreonine. Ser269 is modified (phosphoserine). A compositionally biased stretch (acidic residues) spans 309 to 322; the sequence is SNIDTEGEGNGELG.

Interacts with ORD. Component of PRC1 complex, which contains many PcG proteins like Pc, ph, Scm, Psc, Sce and also chromatin remodeling proteins such as histone deacetylases. This complex is distinct from the Esc/E(z) complex, at least composed of esc, E(z), Su(z)12, HDAC1/Rpd3 and Caf1-55. The two complexes however cooperate and interact together during the first 3 hours of development to establish PcG silencing. As to expression, ubiquitously expressed in syncytial blastoderm embryos. Ubiquitously expressed until stage 11. Then, it is only expressed in the neuroectoderm. Later in embryonic development, it is only expressed in the CNS. In larvae, it is expressed in all imaginal disks. Expressed in the male and female gonads.

It is found in the nucleus. It localises to the chromosome. The enzyme catalyses S-ubiquitinyl-[E2 ubiquitin-conjugating enzyme]-L-cysteine + [acceptor protein]-L-lysine = [E2 ubiquitin-conjugating enzyme]-L-cysteine + N(6)-ubiquitinyl-[acceptor protein]-L-lysine.. It participates in protein modification; protein ubiquitination. Its function is as follows. E3 ubiquitin-protein ligase that mediates monoubiquitination of 'Lys-118' of histone H2A, thereby playing a central role in histone code and gene regulation. H2A 'Lys-118' ubiquitination gives a specific tag for epigenetic transcriptional repression. Polycomb group (PcG) protein. PcG proteins act by forming multiprotein complexes, which are required to maintain the transcriptionally repressive state of homeotic genes throughout development. PcG proteins are not required to initiate repression, but to maintain it during later stages of development. PcG complexes act via modification of histones, such as methylation, deacetylation, ubiquitination rendering chromatin heritably changed in its expressibility. May play a role in meiotic sister chromatid cohesion. The sequence is that of E3 ubiquitin-protein ligase RING1 (Sce) from Drosophila melanogaster (Fruit fly).